Reading from the N-terminus, the 88-residue chain is Small ribosomal subunit protein uS17 (88 aa).

It belongs to the universal ribosomal protein uS17 family. Part of the 30S ribosomal subunit.

Functionally, one of the primary rRNA binding proteins, it binds specifically to the 5'-end of 16S ribosomal RNA. The polypeptide is Small ribosomal subunit protein uS17 (Vesicomyosocius okutanii subsp. Calyptogena okutanii (strain HA)).